The following is a 100-amino-acid chain: NADH-quinone oxidoreductase subunit K (100 aa).

Helical transmembrane passes span 2-22, 29-49, and 63-83; these read ITLSHYLVVAALMFVLGLIGI, IMLFFSSEILLNAANVALAAI, and LFIVAVAASEVAVGLGLLILW.

The protein belongs to the complex I subunit 4L family. In terms of assembly, NDH-1 is composed of 14 different subunits. Subunits NuoA, H, J, K, L, M, N constitute the membrane sector of the complex.

Its subcellular location is the cell inner membrane. The enzyme catalyses a quinone + NADH + 5 H(+)(in) = a quinol + NAD(+) + 4 H(+)(out). Functionally, NDH-1 shuttles electrons from NADH, via FMN and iron-sulfur (Fe-S) centers, to quinones in the respiratory chain. The immediate electron acceptor for the enzyme in this species is believed to be ubiquinone. Couples the redox reaction to proton translocation (for every two electrons transferred, four hydrogen ions are translocated across the cytoplasmic membrane), and thus conserves the redox energy in a proton gradient. The sequence is that of NADH-quinone oxidoreductase subunit K from Campylobacter curvus (strain 525.92).